Consider the following 419-residue polypeptide: UDP-N-acetylglucosamine 1-carboxyvinyltransferase (419 aa).

22–23 (KN) contacts phosphoenolpyruvate. Residue Arg-91 coordinates UDP-N-acetyl-alpha-D-glucosamine. Cys-115 serves as the catalytic Proton donor. Residue Cys-115 is modified to 2-(S-cysteinyl)pyruvic acid O-phosphothioketal. UDP-N-acetyl-alpha-D-glucosamine-binding positions include 120-124 (RPVDL), 160-163 (KVSV), Asp-305, and Val-327.

This sequence belongs to the EPSP synthase family. MurA subfamily.

It localises to the cytoplasm. It catalyses the reaction phosphoenolpyruvate + UDP-N-acetyl-alpha-D-glucosamine = UDP-N-acetyl-3-O-(1-carboxyvinyl)-alpha-D-glucosamine + phosphate. Its pathway is cell wall biogenesis; peptidoglycan biosynthesis. Cell wall formation. Adds enolpyruvyl to UDP-N-acetylglucosamine. The sequence is that of UDP-N-acetylglucosamine 1-carboxyvinyltransferase from Escherichia fergusonii (strain ATCC 35469 / DSM 13698 / CCUG 18766 / IAM 14443 / JCM 21226 / LMG 7866 / NBRC 102419 / NCTC 12128 / CDC 0568-73).